We begin with the raw amino-acid sequence, 334 residues long: MLCRLGGRWLRPLPALQLWARDPPLAPVPTSGAKRPTLPVWAVTPVSAVHANGWYEALAASSPVRVAEEVLLGVHAATGLPWWGSIPLSTAALRGAVTLPLAAYQHYILAKVENLQPEIKTIARHLNQEVAVRANQLGWSKRDARLTYLKNMRRLISELYVRDNCHPFKATVLVWIQLPMWIFMSFALRNLSTGAAHSEAGFSVEEQLAAGGILWFSDLTAPDPTWILPVSLGVINLLIVEICVLQKIGMSRFQTYITYFVRAMSVLMIPIAATVPSSIVLYWLCSSFVGLSQNLLLRSPGFRQLCRIPSTKSDSETPYKDIFAAFNTKFISRK.

The chain crosses the membrane as a helical span at residues 168–188 (FKATVLVWIQLPMWIFMSFAL). The Mitochondrial matrix segment spans residues 189–224 (RNLSTGAAHSEAGFSVEEQLAAGGILWFSDLTAPDP). The helical transmembrane segment at 225–245 (TWILPVSLGVINLLIVEICVL) threads the bilayer. Topologically, residues 246-263 (QKIGMSRFQTYITYFVRA) are mitochondrial intermembrane. Residues 264–284 (MSVLMIPIAATVPSSIVLYWL) traverse the membrane as a helical segment. The Mitochondrial matrix portion of the chain corresponds to 285-334 (CSSFVGLSQNLLLRSPGFRQLCRIPSTKSDSETPYKDIFAAFNTKFISRK).

Belongs to the OXA1/ALB3/YidC family. In terms of assembly, found in a complex with TMEM177, COA6, MT-CO2/COX2, COX20, SCO1 and SCO2. Interacts transiently with MT-CO2/COX2 during its maturation. Interacts with COX20 in a MT-CO2/COX2-dependent manner.

The protein localises to the mitochondrion inner membrane. Mitochondrial membrane insertase required for the translocation of the C-terminus of cytochrome c oxidase subunit II (MT-CO2/COX2) across the mitochondrial inner membrane. Plays a role in MT-CO2/COX2 maturation following the COX20-mediated stabilization of newly synthesized MT-CO2/COX2 protein and before the action of the metallochaperones SCO1/2. Essential for the assembly and stability of the mitochondrial respiratory chain complex IV (also known as cytochrome c oxidase). This Pongo abelii (Sumatran orangutan) protein is Cytochrome c oxidase assembly protein COX18, mitochondrial (COX18).